Here is a 361-residue protein sequence, read N- to C-terminus: Zinc transporter ZIP13 (361 aa).

Residues 1 to 6 (MPGCPC) lie on the Lumenal side of the membrane. A helical membrane pass occupies residues 7 to 27 (PGCGMAGQRLLFLTVLALELL). Over 28–68 (ERAGGSQPALRSLGAAAACRLDNKESESWGALLSGERLDTW) the chain is Cytoplasmic. Residues 69–89 (ICSLLGSLMVGLSGVFPLLVI) traverse the membrane as a helical segment. Residues 90 to 108 (PLEMGTLLQSEAGAWRLRQ) are Lumenal-facing. Residues 109 to 129 (LLSFALGGLLGNVFLHLLPEA) form a helical membrane-spanning segment. The Cytoplasmic portion of the chain corresponds to 130–150 (WAYTCNITPGGEGQSLQRQQQ). Residues 151–171 (LGLWVIAGFLTFLALEKMFLN) traverse the membrane as a helical segment. Topologically, residues 172 to 232 (SKEDPSQAPS…TIDNFTHGLA (61 aa)) are lumenal. A helical transmembrane segment spans residues 233–253 (VAASFLVSKKIGLLTTMAILL). Residues 254-259 (HEIPHE) carry the XEXPHE-motif motif. At 254 to 275 (HEIPHEVGDFAILLRAGFDRWT) the chain is on the cytoplasmic side. The helical transmembrane segment at 276–296 (AAKLQFSTALGGLLGACFAIC) threads the bilayer. Over 297-306 (TQSPKGVEET) the chain is Lumenal. A helical membrane pass occupies residues 307 to 327 (VVWILPFTSGGFLYIALVNVL). The Cytoplasmic segment spans residues 328–339 (PDLLEEDDPWHS). The chain crosses the membrane as a helical span at residues 340–360 (LQQVLLLCSGVLVMVLLSLFV). Position 361 (E361) is a topological domain, lumenal.

The protein belongs to the ZIP transporter (TC 2.A.5) family. As to quaternary structure, homodimer. Highly expressed in some tissues such as bone and eye. Expressed in osteoblasts of tibia and of alveolar bone, in proliferative zone of growth plate, and in odontoblasts on the forming of the dentine of crown in molar tooth. Also expressed fibroblasts in reticular layer of dermis of skin.

It localises to the golgi apparatus membrane. Its subcellular location is the cytoplasmic vesicle membrane. The protein localises to the endoplasmic reticulum membrane. It catalyses the reaction Zn(2+)(in) = Zn(2+)(out). In terms of biological role, functions as a zinc transporter transporting Zn(2+) from the Golgi apparatus to the cytosol and thus influences the zinc level at least in areas of the cytosol. May regulate beige adipocyte differentiation. In Mus musculus (Mouse), this protein is Zinc transporter ZIP13.